The following is a 151-amino-acid chain: S-protein homolog 27 (151 aa).

N-linked (GlcNAc...) asparagine glycans are attached at residues asparagine 91 and asparagine 123.

This sequence belongs to the plant self-incompatibility (S1) protein family.

It localises to the secreted. This Arabidopsis thaliana (Mouse-ear cress) protein is S-protein homolog 27.